The following is a 73-amino-acid chain: Neutrophil elastase 2B (73 aa).

The Peptidase S1 domain occupies 1–73 (IVGGRPARPH…SGGPLVCNGL (73 aa)). S64 acts as the Charge relay system in catalysis.

The protein belongs to the peptidase S1 family. Elastase subfamily.

Its function is as follows. May be involved in the degradation of connective tissue in chronic lung disease. In Equus caballus (Horse), this protein is Neutrophil elastase 2B.